The primary structure comprises 121 residues: Small ribosomal subunit protein uS13 (121 aa).

Positions 91-121 (HRRGLPVRGQKTKNNARTRKGPVKTVANKKK) are disordered.

It belongs to the universal ribosomal protein uS13 family. Part of the 30S ribosomal subunit. Forms a loose heterodimer with protein S19. Forms two bridges to the 50S subunit in the 70S ribosome.

Located at the top of the head of the 30S subunit, it contacts several helices of the 16S rRNA. In the 70S ribosome it contacts the 23S rRNA (bridge B1a) and protein L5 of the 50S subunit (bridge B1b), connecting the 2 subunits; these bridges are implicated in subunit movement. Contacts the tRNAs in the A and P-sites. This chain is Small ribosomal subunit protein uS13, found in Staphylococcus carnosus (strain TM300).